A 102-amino-acid polypeptide reads, in one-letter code: Small ribosomal subunit protein uS10 (102 aa).

It belongs to the universal ribosomal protein uS10 family. In terms of assembly, part of the 30S ribosomal subunit.

Involved in the binding of tRNA to the ribosomes. The sequence is that of Small ribosomal subunit protein uS10 from Brevibacillus brevis (strain 47 / JCM 6285 / NBRC 100599).